Here is a 137-residue protein sequence, read N- to C-terminus: Phospholipase A2 homolog PLA2-03 (137 aa).

The first 16 residues, 1-16 (MRTLWIVAVLLVGVEG), serve as a signal peptide directing secretion. Disulfide bonds link cysteine 42-cysteine 131, cysteine 44-cysteine 60, cysteine 59-cysteine 111, cysteine 65-cysteine 137, cysteine 66-cysteine 104, cysteine 73-cysteine 97, and cysteine 91-cysteine 102. The important for membrane-damaging activities in eukaryotes and bacteria; heparin-binding stretch occupies residues 121–133 (KKYKIFPKFLCKK).

The protein belongs to the phospholipase A2 family. Group II subfamily. K49 sub-subfamily. Expressed by the venom gland.

It is found in the secreted. Its function is as follows. Snake venom phospholipase A2 homolog that lacks enzymatic activity. Is myotoxic and displays edema-inducing activities in mouse paw. A model of myotoxic mechanism has been proposed: an apo Lys49-PLA2 is activated by the entrance of a hydrophobic molecule (e.g. fatty acid) at the hydrophobic channel of the protein leading to a reorientation of a monomer. This reorientation causes a transition between 'inactive' to 'active' states, causing alignment of C-terminal and membrane-docking sites (MDoS) side-by-side and putting the membrane-disruption sites (MDiS) in the same plane, exposed to solvent and in a symmetric position for both monomers. The MDoS region stabilizes the toxin on membrane by the interaction of charged residues with phospholipid head groups. Subsequently, the MDiS region destabilizes the membrane with penetration of hydrophobic residues. This insertion causes a disorganization of the membrane, allowing an uncontrolled influx of ions (i.e. calcium and sodium), and eventually triggering irreversible intracellular alterations and cell death. This Ovophis okinavensis (Ryukyu Island pit viper) protein is Phospholipase A2 homolog PLA2-03.